The chain runs to 88 residues: UPF0298 protein Bcer98_2635 (88 aa).

The protein belongs to the UPF0298 family.

The protein localises to the cytoplasm. In Bacillus cytotoxicus (strain DSM 22905 / CIP 110041 / 391-98 / NVH 391-98), this protein is UPF0298 protein Bcer98_2635.